We begin with the raw amino-acid sequence, 486 residues long: Homoserine O-acetyltransferase (486 aa).

The AB hydrolase-1 domain occupies Asn-66–Glu-436. The active site involves Ser-162. Ser-162 serves as the catalytic Nucleophile. The interval Lys-248–Ser-274 is disordered. Over residues Ser-250–Ala-262 the composition is skewed to polar residues. Residues Asp-401 and His-430 contribute to the active site.

The protein belongs to the AB hydrolase superfamily. MetX family.

The catalysed reaction is L-homoserine + acetyl-CoA = O-acetyl-L-homoserine + CoA. The protein operates within amino-acid biosynthesis; L-methionine biosynthesis via de novo pathway; O-acetyl-L-homoserine from L-homoserine: step 1/1. Commits homoserine to the methionine biosynthesis pathway by catalyzing its O-acetylation. The polypeptide is Homoserine O-acetyltransferase (MET2) (Saccharomyces pastorianus (Lager yeast)).